The sequence spans 209 residues: Large ribosomal subunit protein uL3 (209 aa).

A disordered region spans residues 133–152; sequence THGNSLSHRVPGSIGQNQTP. The residue at position 150 (Gln150) is an N5-methylglutamine.

Belongs to the universal ribosomal protein uL3 family. In terms of assembly, part of the 50S ribosomal subunit. Forms a cluster with proteins L14 and L19. Methylated by PrmB.

Its function is as follows. One of the primary rRNA binding proteins, it binds directly near the 3'-end of the 23S rRNA, where it nucleates assembly of the 50S subunit. This is Large ribosomal subunit protein uL3 from Yersinia pseudotuberculosis serotype O:1b (strain IP 31758).